A 611-amino-acid polypeptide reads, in one-letter code: Procollagen galactosyltransferase 1-B (611 aa).

The signal sequence occupies residues 1–24 (MSQAGVERLLKGLQILVLVLRLSA). 5 N-linked (GlcNAc...) asparagine glycosylation sites follow: N85, N173, N370, N373, and N568. The span at 576–591 (DRAKSRKTHQQEKLRS) shows a compositional bias: basic and acidic residues. Residues 576–611 (DRAKSRKTHQQEKLRSEALNTPSMGSPFDNTARDEL) form a disordered region. Positions 608-611 (RDEL) match the Prevents secretion from ER motif.

This sequence belongs to the glycosyltransferase 25 family.

Its subcellular location is the endoplasmic reticulum lumen. It carries out the reaction (5R)-5-hydroxy-L-lysyl-[collagen] + UDP-alpha-D-galactose = (5R)-5-O-(beta-D-galactosyl)-5-hydroxy-L-lysyl-[collagen] + UDP + H(+). Beta-galactosyltransferase that transfers beta-galactose to hydroxylysine residues of type I collagen. By acting on collagen glycosylation, facilitates the formation of collagen triple helix. The protein is Procollagen galactosyltransferase 1-B (colgalt1-b) of Xenopus laevis (African clawed frog).